The chain runs to 180 residues: Bifunctional protein PyrR (180 aa).

Residues 101-113 carry the PRPP-binding motif; it reads LIVVDDVLFTGRT.

Belongs to the purine/pyrimidine phosphoribosyltransferase family. PyrR subfamily. As to quaternary structure, homodimer and homohexamer; in equilibrium.

It carries out the reaction UMP + diphosphate = 5-phospho-alpha-D-ribose 1-diphosphate + uracil. Its function is as follows. Regulates transcriptional attenuation of the pyrimidine nucleotide (pyr) operon by binding in a uridine-dependent manner to specific sites on pyr mRNA. This disrupts an antiterminator hairpin in the RNA and favors formation of a downstream transcription terminator, leading to a reduced expression of downstream genes. Also displays a weak uracil phosphoribosyltransferase activity which is not physiologically significant. The chain is Bifunctional protein PyrR from Bacillus pumilus (strain SAFR-032).